We begin with the raw amino-acid sequence, 123 residues long: UPF0102 protein Csal_2201 (123 aa).

This sequence belongs to the UPF0102 family.

The sequence is that of UPF0102 protein Csal_2201 from Chromohalobacter salexigens (strain ATCC BAA-138 / DSM 3043 / CIP 106854 / NCIMB 13768 / 1H11).